The sequence spans 439 residues: Dihydroorotase (439 aa).

Residues histidine 65 and histidine 67 each contribute to the Zn(2+) site. Residues 67–69 (HFR) and asparagine 99 each bind substrate. 4 residues coordinate Zn(2+): aspartate 156, histidine 183, histidine 246, and aspartate 321. The active site involves aspartate 321. Residues histidine 325 and 339 to 340 (FG) contribute to the substrate site.

The protein belongs to the metallo-dependent hydrolases superfamily. DHOase family. Class I DHOase subfamily. Requires Zn(2+) as cofactor.

The catalysed reaction is (S)-dihydroorotate + H2O = N-carbamoyl-L-aspartate + H(+). The protein operates within pyrimidine metabolism; UMP biosynthesis via de novo pathway; (S)-dihydroorotate from bicarbonate: step 3/3. Its function is as follows. Catalyzes the reversible cyclization of carbamoyl aspartate to dihydroorotate. This is Dihydroorotase from Chlorobaculum tepidum (strain ATCC 49652 / DSM 12025 / NBRC 103806 / TLS) (Chlorobium tepidum).